We begin with the raw amino-acid sequence, 513 residues long: MIILWLILALSALLYWLHRANKDYHILSFFTKRIRLKDGTPVEIIAPIAKGKTIFGNTLDLYGRDHAGVFNYSRERAKEMGTSYIEYVFGKAIYNIIDADSAENVLNHPNLITKGLVYNFLHPFLRTGLLTSTGKKWHARRKMLTPTFHFNILNQFQEIFKTESQKFLLQFEGQDEVTITLHDVIPRFTLNSICETAMGVKLDEMAEKGDRYRENFSQIEECFIRRLSNPLLWGDKLFEMFAAKDFASALDVVHRFSSEIIAKRRDLLKDELDKSSSTADDDGFVSKKRFAMLDTLIYAEKDGLIDHIGICEEVDTLMFEGYDTTSIGLIFGLMNMSLNPDKQELCYQEIQEHIDDDLSNLDVGQLNKLKYLEYFMKETTRLFPSVPIMGREAVQETELANGLILPKGAQITIHVFDIHRNAKYWDSPEEFRPERFLPENVQDRHTYAYVPFSAGQRNCIGKKYAMQEMKTLMVVLLKQFKVLKAIDPQKIVFHTGITLRTQDKIRVKLVRRT.

2 residues coordinate heme: E320 and C459.

The protein belongs to the cytochrome P450 family. It depends on heme as a cofactor.

It is found in the endoplasmic reticulum membrane. Its subcellular location is the microsome membrane. Functionally, may be involved in the metabolism of insect hormones and in the breakdown of synthetic insecticides. The sequence is that of Cytochrome P450 4p1 (Cyp4p1) from Drosophila melanogaster (Fruit fly).